Reading from the N-terminus, the 353-residue chain is Phospho-N-acetylmuramoyl-pentapeptide-transferase (353 aa).

A run of 10 helical transmembrane segments spans residues 24–44 (LGFFIAFFLTLFLMPKFILWA), 66–86 (TPTMGGIVFVFATIVASVLCA), 88–108 (LGNLYVLLGLIVLVGFSFVGF), 129–149 (FGMLFILSLIVSVLLSLKGLD), 160–180 (PLFEMPTMLAVGFWVLVFLST), 192–212 (GLASVPSIFTLLSLSIFVYVA), 229–249 (VGELFVVSLALVGSLFGFLWY), 256–276 (VFMGDSGSLALGGFIAYNAIV), 281–301 (ILLVLMGSIFVIETLSVILQV), and 330–350 (KVIVRFWIISMLSNLVALLSL).

Belongs to the glycosyltransferase 4 family. MraY subfamily. The cofactor is Mg(2+).

The protein localises to the cell inner membrane. The enzyme catalyses UDP-N-acetyl-alpha-D-muramoyl-L-alanyl-gamma-D-glutamyl-meso-2,6-diaminopimeloyl-D-alanyl-D-alanine + di-trans,octa-cis-undecaprenyl phosphate = di-trans,octa-cis-undecaprenyl diphospho-N-acetyl-alpha-D-muramoyl-L-alanyl-D-glutamyl-meso-2,6-diaminopimeloyl-D-alanyl-D-alanine + UMP. Its pathway is cell wall biogenesis; peptidoglycan biosynthesis. Functionally, catalyzes the initial step of the lipid cycle reactions in the biosynthesis of the cell wall peptidoglycan: transfers peptidoglycan precursor phospho-MurNAc-pentapeptide from UDP-MurNAc-pentapeptide onto the lipid carrier undecaprenyl phosphate, yielding undecaprenyl-pyrophosphoryl-MurNAc-pentapeptide, known as lipid I. This is Phospho-N-acetylmuramoyl-pentapeptide-transferase from Helicobacter pylori (strain ATCC 700392 / 26695) (Campylobacter pylori).